The sequence spans 613 residues: V-type proton ATPase catalytic subunit A isoform 2 (613 aa).

240–247 is an ATP binding site; that stretch reads GAFGCGKT.

Belongs to the ATPase alpha/beta chains family. As to quaternary structure, V-ATPase is a heteromultimeric enzyme composed of a peripheral catalytic V1 complex (main components: subunits A, B, C, D, E, and F) attached to an integral membrane V0 proton pore complex (main component: the proteolipid protein).

It carries out the reaction ATP + H2O + 4 H(+)(in) = ADP + phosphate + 5 H(+)(out). Its function is as follows. Catalytic subunit of the peripheral V1 complex of vacuolar ATPase. V-ATPase vacuolar ATPase is responsible for acidifying a variety of intracellular compartments in eukaryotic cells. This Acetabularia acetabulum (Mermaid's wine glass) protein is V-type proton ATPase catalytic subunit A isoform 2.